Consider the following 240-residue polypeptide: Ubiquinone biosynthesis O-methyltransferase (240 aa).

Positions 44, 64, 85, and 129 each coordinate S-adenosyl-L-methionine.

This sequence belongs to the methyltransferase superfamily. UbiG/COQ3 family.

The enzyme catalyses a 3-demethylubiquinol + S-adenosyl-L-methionine = a ubiquinol + S-adenosyl-L-homocysteine + H(+). The catalysed reaction is a 3-(all-trans-polyprenyl)benzene-1,2-diol + S-adenosyl-L-methionine = a 2-methoxy-6-(all-trans-polyprenyl)phenol + S-adenosyl-L-homocysteine + H(+). It participates in cofactor biosynthesis; ubiquinone biosynthesis. Its function is as follows. O-methyltransferase that catalyzes the 2 O-methylation steps in the ubiquinone biosynthetic pathway. The polypeptide is Ubiquinone biosynthesis O-methyltransferase (Escherichia coli O9:H4 (strain HS)).